A 197-amino-acid chain; its full sequence is Putative methyltransferase Mtx subunit A (197 aa).

Belongs to the MtrA family. In terms of assembly, may be part of a complex composed of 3 subunits; MtxA, MtxH and MtxX.

In Methanosarcina acetivorans (strain ATCC 35395 / DSM 2834 / JCM 12185 / C2A), this protein is Putative methyltransferase Mtx subunit A (mtxA).